A 189-amino-acid chain; its full sequence is Ras-like protein rasG (189 aa).

10 to 17 is a binding site for GTP; it reads GGGGVGKS. The Effector region motif lies at 32–40; sequence YDPTIEDSY. GTP is bound by residues 57-61 and 116-119; these read DTAGQ and NKCD. Residues 169-189 form a disordered region; that stretch reads KGDSKPEKGKKKRPLKACTLL. At cysteine 186 the chain carries Cysteine methyl ester. The S-geranylgeranyl cysteine moiety is linked to residue cysteine 186. The propeptide at 187-189 is removed in mature form; it reads TLL.

It belongs to the small GTPase superfamily. Ras family. In terms of assembly, interacts with ripA.

Its subcellular location is the cell membrane. The catalysed reaction is GTP + H2O = GDP + phosphate + H(+). With respect to regulation, alternates between an inactive form bound to GDP and an active form bound to GTP. Activated by a guanine nucleotide-exchange factor (GEF) and inactivated by a GTPase-activating protein (GAP). In terms of biological role, ras proteins bind GDP/GTP and possess intrinsic GTPase activity. This chain is Ras-like protein rasG (rasG), found in Dictyostelium discoideum (Social amoeba).